A 1064-amino-acid polypeptide reads, in one-letter code: Importin-13 homolog A (1064 aa).

The Importin N-terminal domain maps to 40 to 109 (ALPQIQQWLI…LDNLLLFLKT (70 aa)). Disordered stretches follow at residues 695–722 (TTQQ…NNNN) and 839–860 (NNKK…NENN). The span at 700-722 (NNNNNNNNNNNNNNNNNNNNNNN) shows a compositional bias: low complexity.

It belongs to the importin beta family. Forms a complex with an importin alpha subunit.

The protein resides in the cytoplasm. The protein localises to the nucleus envelope. Functionally, required for nuclear protein import and mediates docking of import substrate to distinct nucleoporins. This is Importin-13 homolog A (ipo13A) from Dictyostelium discoideum (Social amoeba).